Here is a 252-residue protein sequence, read N- to C-terminus: Methylthioribulose-1-phosphate dehydratase (252 aa).

Cys-105 serves as a coordination point for substrate. Zn(2+) contacts are provided by His-123 and His-125. Glu-151 serves as the catalytic Proton donor/acceptor. Position 208 (His-208) interacts with Zn(2+).

This sequence belongs to the aldolase class II family. MtnB subfamily. Zn(2+) is required as a cofactor.

The protein resides in the cytoplasm. It carries out the reaction 5-(methylsulfanyl)-D-ribulose 1-phosphate = 5-methylsulfanyl-2,3-dioxopentyl phosphate + H2O. It participates in amino-acid biosynthesis; L-methionine biosynthesis via salvage pathway; L-methionine from S-methyl-5-thio-alpha-D-ribose 1-phosphate: step 2/6. Functionally, catalyzes the dehydration of methylthioribulose-1-phosphate (MTRu-1-P) into 2,3-diketo-5-methylthiopentyl-1-phosphate (DK-MTP-1-P). This chain is Methylthioribulose-1-phosphate dehydratase, found in Sclerotinia sclerotiorum (strain ATCC 18683 / 1980 / Ss-1) (White mold).